Here is a 462-residue protein sequence, read N- to C-terminus: Flavin-containing monooxygenase FMO GS-OX3 (462 aa).

FAD is bound at residue 17–22 (GAGPAG). NADP(+) is bound at residue 212 to 217 (GNFASG). Residues 318 to 338 (ALAPGLAFVGLPAMGIVFVMF) traverse the membrane as a helical segment.

It belongs to the FMO family.

Its subcellular location is the membrane. The catalysed reaction is a (Z)-omega-(methylsulfanyl)-N-sulfo-alkylhydroximate S-glucoside + NADPH + O2 + H(+) = a (Z)-omega-(methylsulfinyl)-alkyl-glucosinolate + NADP(+) + H2O. Functionally, catalyzes the conversion of methylthioalkyl glucosinolates of any chain length into methylsulfinylalkyl glucosinolates. Prefers probably short-chain methylthioalkyl glucosinolates in cv. Landsberg erecta. The sequence is that of Flavin-containing monooxygenase FMO GS-OX3 (FMOGS-OX3) from Arabidopsis thaliana (Mouse-ear cress).